The chain runs to 196 residues: Hibernation-associated plasma protein HP-20 (196 aa).

The N-terminal stretch at Met1–Cys23 is a signal peptide. In terms of domain architecture, Collagen-like spans Gly25–Ser63. Over residues Gly28 to Gln47 the composition is skewed to pro residues. The tract at residues Gly28–Val64 is disordered. The C1q domain maps to Pro67–Ser196.

As to expression, plasma; synthesized in the liver.

The protein resides in the secreted. Functionally, plasma proteins HP-20, HP-25, HP-27 and HP-55 form a 140 kDa complex via disulfide bonds in the plasma and are hibernation specific. This is Hibernation-associated plasma protein HP-20 from Tamias sibiricus (Siberian chipmunk).